Here is a 31-residue protein sequence, read N- to C-terminus: Cliotide T14 (31 aa).

The segment at residues 1-31 is a cross-link (cyclopeptide (Asp-Asn)); the sequence is DTIPCGESCVWIPCISSILGCSCKDKVCYHN. Disulfide bonds link C5/C21, C9/C23, and C14/C28.

Post-translationally, contains 3 disulfide bonds. In terms of processing, this is a cyclic peptide. In terms of tissue distribution, expressed in seed but not in root nodules.

In terms of biological role, probably participates in a plant defense mechanism. Not active against Gram-negative bacterium E.coli ATCC 700926 or Gram-positive bacterium S.aureus ATCC 12600 up to a concentration of 100 uM under low-salt conditions. This Clitoria ternatea (Butterfly pea) protein is Cliotide T14.